The sequence spans 440 residues: Sialyltransferase-like protein 2 (440 aa).

Residues 1–5 (MKLLH) are Cytoplasmic-facing. Residues 6–26 (LIFLLALTTGISAVLIYIIGV) form a helical; Signal-anchor for type II membrane protein membrane-spanning segment. Residues 27 to 440 (SNLYESNRFT…HGQLCITPAD (414 aa)) are Lumenal-facing. Asn113 and Asn149 each carry an N-linked (GlcNAc...) asparagine glycan.

This sequence belongs to the glycosyltransferase 29 family.

It localises to the golgi apparatus membrane. In terms of biological role, may be involved in the transfer of 2-keto-3-deoxy-D-lyxo-heptulosaric acid (Dha) and/or 2-keto-3-deoxy-D-manno-octulosonic acid (Kdo) on the homogalacturonan backbone of rhamnogalacturonan-II. Required for efficient pollen grain germination and pollen tube elongation. Does not possess sialyltransferase activity in vitro. This chain is Sialyltransferase-like protein 2, found in Arabidopsis thaliana (Mouse-ear cress).